The following is a 63-amino-acid chain: MVSMKQVERQKLNQKLMRAAATGDIEAVQKLVLRGADIYCRDHQGDTALSLAAGSGYLDILDI.

2 ANK repeats span residues 11–43 (KLNQKLMRAAATGDIEAVQKLVLRGADIYCRDH) and 44–63 (QGDTALSLAAGSGYLDILDI).

This Rickettsia felis (strain ATCC VR-1525 / URRWXCal2) (Rickettsia azadi) protein is Putative ankyrin repeat protein RF_p14.